The primary structure comprises 101 residues: ATP synthase subunit c (101 aa).

A run of 2 helical transmembrane segments spans residues alanine 31–glutamine 51 and alanine 81–glycine 101.

It belongs to the ATPase C chain family. As to quaternary structure, F-type ATPases have 2 components, F(1) - the catalytic core - and F(0) - the membrane proton channel. F(1) has five subunits: alpha(3), beta(3), gamma(1), delta(1), epsilon(1). F(0) has three main subunits: a(1), b(2) and c(10-14). The alpha and beta chains form an alternating ring which encloses part of the gamma chain. F(1) is attached to F(0) by a central stalk formed by the gamma and epsilon chains, while a peripheral stalk is formed by the delta and b chains.

It localises to the cell membrane. In terms of biological role, f(1)F(0) ATP synthase produces ATP from ADP in the presence of a proton or sodium gradient. F-type ATPases consist of two structural domains, F(1) containing the extramembraneous catalytic core and F(0) containing the membrane proton channel, linked together by a central stalk and a peripheral stalk. During catalysis, ATP synthesis in the catalytic domain of F(1) is coupled via a rotary mechanism of the central stalk subunits to proton translocation. Key component of the F(0) channel; it plays a direct role in translocation across the membrane. A homomeric c-ring of between 10-14 subunits forms the central stalk rotor element with the F(1) delta and epsilon subunits. The protein is ATP synthase subunit c of Mesomycoplasma hyopneumoniae (strain 7448) (Mycoplasma hyopneumoniae).